Consider the following 515-residue polypeptide: Acetyltransferase sphE (515 aa).

Active-site proton acceptor residues include H184 and D438.

The protein belongs to the plant acyltransferase family. In terms of assembly, monomer.

The catalysed reaction is sphingofungin B + acetyl-CoA = sphingofungin C + CoA. The protein operates within secondary metabolite biosynthesis. Functionally, acetyltransferase; part of the gene cluster that mediates the biosynthesis of sphingofungins, bioactive molecules acting as sphingolipid inhibitors via inhibiting serine palmitoyl transferase (SPT). Within the pathway, sphE catalyzes the O-acetylation of the C-5 hydroxyl group of sphingofungin B to produce sphingofungin C. SphE can also convert sphingofungin B1 into sphingofungin C1 and sphingofungin B2 into sphingofungin C2. Sphingofungin biosynthesis starts with the PKS sphB that produces an C18 polyketide precursor 3-hydroxyoctadeca-4,10-dienoyl-ACP containing one delta-6 desaturation and one delta-12 desaturation. The aminoacyl transferase sphA uses the sphB product to produce 3-keto-presphingofungin by adding an aminomalonate molecule. SphF then reduces the C-3 ketone of 3-keto-presphingofungin which leads to presphingofungin. The cytochrome P450 monooxygenase sphH converts presphingofungin into sphingofungin B1 which is further converted to sphingofungin B by the dioxygenase sphC. SphC is also able to convert presphingofungin into sphingofungin B2. The acetyltransferase sphE acetylates sphingofungin B to produce sphingofungin C, but can also convert sphingofungin B1 into sphingofungin C1 and sphingofungin B2 into sphingofungin C2. Finally, sphingofungin C can be spontaneously converted into sphingofungin D. The sequence is that of Acetyltransferase sphE from Aspergillus fumigatus (strain CBS 144.89 / FGSC A1163 / CEA10) (Neosartorya fumigata).